Here is a 508-residue protein sequence, read N- to C-terminus: Photosystem II CP47 reaction center protein (508 aa).

Helical transmembrane passes span 21 to 36, 101 to 115, 140 to 156, 203 to 218, 237 to 252, and 457 to 472; these read AVHL…WAGS, IILS…IWHW, GIHL…FGAF, IAAG…FHLS, VLSS…AFVV, and IFAL…HGAR.

This sequence belongs to the PsbB/PsbC family. PsbB subfamily. In terms of assembly, PSII is composed of 1 copy each of membrane proteins PsbA, PsbB, PsbC, PsbD, PsbE, PsbF, PsbH, PsbI, PsbJ, PsbK, PsbL, PsbM, PsbT, PsbY, PsbZ, Psb30/Ycf12, at least 3 peripheral proteins of the oxygen-evolving complex and a large number of cofactors. It forms dimeric complexes. Binds multiple chlorophylls. PSII binds additional chlorophylls, carotenoids and specific lipids. is required as a cofactor.

It is found in the plastid. The protein resides in the chloroplast thylakoid membrane. Its function is as follows. One of the components of the core complex of photosystem II (PSII). It binds chlorophyll and helps catalyze the primary light-induced photochemical processes of PSII. PSII is a light-driven water:plastoquinone oxidoreductase, using light energy to abstract electrons from H(2)O, generating O(2) and a proton gradient subsequently used for ATP formation. This is Photosystem II CP47 reaction center protein from Bigelowiella natans (Pedinomonas minutissima).